The sequence spans 254 residues: Small ribosomal subunit protein uS2 (254 aa).

The disordered stretch occupies residues 225-254 (ALSERKREKDDAKLKEDEESKKASDKAEIQ). Residues 226-254 (LSERKREKDDAKLKEDEESKKASDKAEIQ) are compositionally biased toward basic and acidic residues.

This sequence belongs to the universal ribosomal protein uS2 family.

The protein is Small ribosomal subunit protein uS2 of Cytophaga hutchinsonii (strain ATCC 33406 / DSM 1761 / CIP 103989 / NBRC 15051 / NCIMB 9469 / D465).